We begin with the raw amino-acid sequence, 397 residues long: Iripin-2 (397 aa).

An N-terminal signal peptide occupies residues 1-21 (MEDFKMKTLAAFLSLLVLCWA). N-linked (GlcNAc...) asparagine glycans are attached at residues asparagine 109 and asparagine 270.

Belongs to the serpin family. In terms of assembly, interacts with mouse MCPT4. In terms of tissue distribution, female salivary gland. Ovary. Midgut.

The protein localises to the secreted. In terms of biological role, serine protease inhibitor that modulates blood feeding of ticks on vertebrate species. Inhibits host trypsin, thrombin (F2), alpha-chymotrypsin, cathepsin G (CTSG) and mast cell chymase (CMA1). Inhibits host cathepsin G- and thrombin-induced platelet aggregation. Inhibits acute inflammation in the host. Suppresses neutrophil recruitment in inflamed area. Does not inhibit host plasmin (PLG), factor Xa (F10), factor XIa (F11), elastase and proteinase 3/myeloblastin (PRTN3). (Microbial infection) Inhibits IL6 production by mouse splenic dendritic cells in response to Borrelia burgdorferi exposure. Decreases levels of STAT3 phosphorylation in mouse splenic dendritic cells in response to Borrelia burgdorferi exposure and in Borrelia-primed CD4+ T-lymphocytes. Inhibits differentiation of mouse Th17 cells, a subset of CD4+ T-lymphocytes that play a crucial role in protection against extracellular bacteria, in response to Borrelia burgdorferi exposure via inhibition of the IL6/STAT3 signaling pathway. The protein is Iripin-2 of Ixodes ricinus (Common tick).